A 303-amino-acid polypeptide reads, in one-letter code: Coenzyme PQQ synthesis protein B (303 aa).

The protein belongs to the PqqB family.

The protein operates within cofactor biosynthesis; pyrroloquinoline quinone biosynthesis. Its function is as follows. May be involved in the transport of PQQ or its precursor to the periplasm. This chain is Coenzyme PQQ synthesis protein B, found in Pseudomonas entomophila (strain L48).